The chain runs to 418 residues: Beta-2 adrenergic receptor (418 aa).

Residues 1–34 lie on the Extracellular side of the membrane; it reads MGQPGNRSVFLLAPNGSHAPDQDVPQERDEAWVV. Asparagine 6 and asparagine 15 each carry an N-linked (GlcNAc...) asparagine glycan. The helical transmembrane segment at 35–58 threads the bilayer; that stretch reads GMAIVMSLIVLAIVFGNVLVITAI. Topologically, residues 59 to 71 are cytoplasmic; the sequence is AKFERLQTVTNYF. A helical transmembrane segment spans residues 72–95; it reads ITSLACADLVMGLAVVPFGASHIL. Over 96 to 106 the chain is Extracellular; it reads MKMWTFGSFWC. 2 disulfide bridges follow: cysteine 106–cysteine 191 and cysteine 184–cysteine 190. Residues 107-129 form a helical membrane-spanning segment; that stretch reads EFWISIDVLCVTASIETLCVIAV. At 130–150 the chain is on the cytoplasmic side; it reads DRYLAITSPFKYQCLLTKNKA. Tyrosine 141 is modified (phosphotyrosine). Residues 151 to 174 form a helical membrane-spanning segment; it reads RVVILMVWVVSGLISFLPIKMHWY. At 175 to 196 the chain is on the extracellular side; it reads QATHREALNCYAEEACCDFFTN. A helical transmembrane segment spans residues 197 to 220; it reads QPYAIASSIVSFYLPLVVMVFVYS. Residues 221–274 are Cytoplasmic-facing; it reads RVFQVARRQLQKIDKSEGRFHAQNLSQAEQDGRSGPGHRRSSKFCLKEHKALKT. A Phosphoserine modification is found at serine 246. A phosphoserine; by PKA mark is found at serine 261 and serine 262. Cysteine 265 carries the S-palmitoyl cysteine lipid modification. Residues 275-298 traverse the membrane as a helical segment; the sequence is LGIIMGTFTLCWLPFFIVNIVHGI. The Extracellular segment spans residues 299 to 305; sequence HDNLIPK. Residues 306 to 329 traverse the membrane as a helical segment; the sequence is EVYILLNWVGYVNSAFNPLIYCRS. The Cytoplasmic segment spans residues 330-418; the sequence is PDFRMAFQEL…RNCSTNDSML (89 aa). Cysteine 341 carries S-palmitoyl cysteine lipidation. A phosphoserine; by PKA mark is found at serine 345 and serine 346. Phosphoserine; by BARK occurs at positions 355 and 356. The tract at residues 381–418 is disordered; the sequence is RLCEDAPGPEGCAHRQGTVPDDSTDSQGRNCSTNDSML. 2 positions are modified to 4-hydroxyproline: proline 387 and proline 400. Over residues 405–418 the composition is skewed to polar residues; sequence DSQGRNCSTNDSML. Residues 415-418 carry the PDZ-binding motif; sequence DSML.

The protein belongs to the G-protein coupled receptor 1 family. Adrenergic receptor subfamily. ADRB2 sub-subfamily. In terms of assembly, binds NHERF1 and GPRASP1. Interacts with ARRB1 and ARRB2. Interacts with SRC. Interacts with USP20 and USP33. Interacts with VHL; the interaction, which is increased on hydroxylation of ADRB2, ubiquitinates ADRB2 leading to its degradation. Interacts with EGLN3; the interaction hydroxylates ADRB2 facilitating VHL-E3 ligase-mediated ubiquitination. Interacts (via PDZ-binding motif) with SNX27 (via PDZ domain); the interaction is required when endocytosed to prevent degradation in lysosomes and promote recycling to the plasma membrane. Interacts with CNIH4. Interacts with ARRDC3. Interacts with NEDD4. Interacts with MARCHF2. Post-translationally, palmitoylated; may reduce accessibility of Ser-345 and Ser-346 by anchoring Cys-341 to the plasma membrane. Agonist stimulation promotes depalmitoylation and further allows Ser-345 and Ser-346 phosphorylation. In terms of processing, phosphorylated by PKA and BARK upon agonist stimulation, which mediates homologous desensitization of the receptor. PKA-mediated phosphorylation seems to facilitate phosphorylation by BARK. Phosphorylation of Tyr-141 is induced by insulin and leads to supersensitization of the receptor. Post-translationally, polyubiquitinated. Agonist-induced ubiquitination leads to sort internalized receptors to the lysosomes for degradation. Deubiquitination by USP20 and USP33, leads to ADRB2 recycling and resensitization after prolonged agonist stimulation. USP20 and USP33 are constitutively associated and are dissociated immediately after agonist stimulation. Ubiquitination by the VHL-E3 ligase complex is oxygen-dependent. In terms of processing, hydroxylation by EGLN3 occurs only under normoxia and increases the interaction with VHL and the subsequent ubiquitination and degradation of ADRB2. Palmitoylated. Mainly palmitoylated at Cys-341. Palmitoylation may reduce accessibility of phosphorylation sites by anchoring the receptor to the plasma membrane. Agonist stimulation promotes depalmitoylation and further allows Ser-345 and Ser-346 phosphorylation. Also undergoes transient, ligand-induced palmitoylation at Cys-265 probably by ZDHHC9, ZDHHC14 and ZDHHC18 within the Golgi. Palmitoylation at Cys-265 requires phosphorylation by PKA and receptor internalization and stabilizes the receptor. Could be depalmitoylated by LYPLA1 at the plasma membrane. In terms of tissue distribution, expressed in heart, liver, lung, skeletal muscle and subcutaneous adipose tissue.

It is found in the cell membrane. Its subcellular location is the early endosome. The protein resides in the golgi apparatus. In terms of biological role, beta-adrenergic receptors mediate the catecholamine-induced activation of adenylate cyclase through the action of G proteins. The beta-2-adrenergic receptor binds epinephrine with an approximately 30-fold greater affinity than it does norepinephrine. The sequence is that of Beta-2 adrenergic receptor (ADRB2) from Sus scrofa (Pig).